A 436-amino-acid chain; its full sequence is GTPase Der (436 aa).

EngA-type G domains lie at Pro4–Glu167 and Ile176–Lys351. Residues Gly10–Ser17, Asp57–Ile61, Asn119–Asp122, Gly182–Ser189, Asp229–Met233, and Asn294–Asp297 each bind GTP. One can recognise a KH-like domain in the interval Lys352–Asn436.

Belongs to the TRAFAC class TrmE-Era-EngA-EngB-Septin-like GTPase superfamily. EngA (Der) GTPase family. Associates with the 50S ribosomal subunit.

Its function is as follows. GTPase that plays an essential role in the late steps of ribosome biogenesis. The protein is GTPase Der of Staphylococcus carnosus (strain TM300).